The chain runs to 1341 residues: Aldehyde oxidase 4 (1341 aa).

Residues 8–95 (DELIFFVNGK…GAAVTTVEGV (88 aa)) enclose the 2Fe-2S ferredoxin-type domain. 4 residues coordinate [2Fe-2S] cluster: C47, C52, C55, and C77. A Mo-molybdopterin-binding site is contributed by Q116. [2Fe-2S] cluster is bound by residues C117, C120, C152, and C154. C154 contacts Mo-molybdopterin. The region spanning 239-424 (FQGERTTWLA…LSVFIPYSSQ (186 aa)) is the FAD-binding PCMH-type domain. FAD contacts are provided by residues 267-274 (LIMGNTTV), A348, T357, H361, D370, and V414. Mo-molybdopterin-binding positions include A805, 805–806 (AF), L1046, 1087–1090 (GSMG), Q1202, and L1266. Catalysis depends on E1268, which acts as the Proton acceptor; for azaheterocycle hydroxylase activity.

It belongs to the xanthine dehydrogenase family. As to quaternary structure, homodimer. Requires [2Fe-2S] cluster as cofactor. The cofactor is FAD. Mo-molybdopterin serves as cofactor. In terms of tissue distribution, detected in liver, testis, kidney, brain, Harderian gland and olfactory mucosa.

The protein localises to the cytoplasm. The catalysed reaction is an aldehyde + O2 + H2O = a carboxylate + H2O2 + H(+). It carries out the reaction retinal + O2 + H2O = retinoate + H2O2 + H(+). In terms of biological role, aldehyde oxidase able to catalyze the oxidation of retinaldehyde into retinoate. Acts as a negative modulator of the epidermal trophism. May be able to oxidize a wide variety of aldehydes into their corresponding carboxylates and to hydroxylate azaheterocycles. In Cavia porcellus (Guinea pig), this protein is Aldehyde oxidase 4 (AOX4).